The chain runs to 137 residues: QVLVLDGRGHLLGRLAAIVAKQVLLGRKVVVVRCEGINISGNFYRNKLKYLAFLRKRMNTNPSRGPYHFRAPSRIFWRTVRGMLPHKTKRGQAALDRLKVFDGIPPPYDKKKRMVVPAALKVVRLKLTGKFXYLGRL.

R55 is subject to Citrulline. Residue S73 is modified to Phosphoserine. Citrulline is present on R136.

It belongs to the universal ribosomal protein uL13 family. Component of the 60S ribosome. Component of the GAIT complex. Interacts with EIF4G1. Phosphorylation at Ser-73 upon interferon-gamma treatment in macrophages involves a DAPK1-DAPK3 kinase cascade and is causing release from the ribosome, association with the GAIT complex and subsequent involvement in transcript-selective translation inhibition. In terms of processing, citrullinated by PADI4.

It localises to the cytoplasm. Associated with ribosomes but is not required for canonical ribosome function and has extra-ribosomal functions. Component of the GAIT (gamma interferon-activated inhibitor of translation) complex which mediates interferon-gamma-induced transcript-selective translation inhibition in inflammation processes. Upon interferon-gamma activation and subsequent phosphorylation dissociates from the ribosome and assembles into the GAIT complex which binds to stem loop-containing GAIT elements in the 3'-UTR of diverse inflammatory mRNAs (such as ceruplasmin) and suppresses their translation. In the GAIT complex interacts with m7G cap-bound eIF4G at or near the eIF3-binding site and blocks the recruitment of the 43S ribosomal complex. Involved in methylation of rRNA. This is Large ribosomal subunit protein uL13 (RPL13A) from Sus scrofa (Pig).